A 210-amino-acid chain; its full sequence is N-(5'-phosphoribosyl)anthranilate isomerase (210 aa).

It belongs to the TrpF family.

It carries out the reaction N-(5-phospho-beta-D-ribosyl)anthranilate = 1-(2-carboxyphenylamino)-1-deoxy-D-ribulose 5-phosphate. It functions in the pathway amino-acid biosynthesis; L-tryptophan biosynthesis; L-tryptophan from chorismate: step 3/5. This is N-(5'-phosphoribosyl)anthranilate isomerase from Staphylococcus aureus (strain Mu3 / ATCC 700698).